The chain runs to 413 residues: MSESRTVERSVRSNRKIKFALMGPAFIAAIGYIDPGNFATNIQAGASYGYQLLWVVVWANVMAMVIQLMSAKLGIATGKNLAEHIRDRFPRPAVWFYWVQAEIIAMATDLAEFIGAAIGFKLVFGVTLLQGAMLTGVATFLILMLQNRGQKPLELVIGGLLLFVAAAYVIELFFSQPKVVDLLQGMAVPSLPTADAVLLAAGVLGATIMPHVIYLHSSLTQNSGDQGSRSERYSSTKLDVAIAMTIAGFVNLAMMATAAATFHFSGHSGVADLDQAYLTLDPLLGKAAALVFGLSLLAAGLSSTVVGTMAGQVVMQGFIHFHIPLLLRRVITMLPSFIVILAGWEPTRILVMSQVLLSFGIALALIPLLAFTGNPGLMGDMVNSRLMQNFGRLIVVVVIALNGYLLVAMALNL.

A run of 11 helical transmembrane segments spans residues 19-39 (FALM…GNFA), 49-69 (GYQL…IQLM), 94-114 (VWFY…AEFI), 122-142 (LVFG…TFLI), 155-175 (LVIG…LFFS), 196-216 (AVLL…IYLH), 240-260 (VAIA…TAAA), 287-307 (AAAL…TVVG), 323-343 (IPLL…ILAG), 349-369 (ILVM…IPLL), and 393-413 (LIVV…ALNL).

It belongs to the NRAMP family.

It localises to the cell inner membrane. Functionally, h(+)-stimulated, divalent metal cation uptake system. This Erwinia tasmaniensis (strain DSM 17950 / CFBP 7177 / CIP 109463 / NCPPB 4357 / Et1/99) protein is Divalent metal cation transporter MntH.